Consider the following 227-residue polypeptide: Small ribosomal subunit protein uS3 (227 aa).

The KH type-2 domain maps to V39–R107.

The protein belongs to the universal ribosomal protein uS3 family. Part of the 30S ribosomal subunit. Forms a tight complex with proteins S10 and S14.

In terms of biological role, binds the lower part of the 30S subunit head. Binds mRNA in the 70S ribosome, positioning it for translation. This is Small ribosomal subunit protein uS3 from Hahella chejuensis (strain KCTC 2396).